The chain runs to 202 residues: MQRAWILLTLGLMACVSAETRTELTSDKDMYLDNSSIEEASGVYPIDDDDYSSASGSGADEDIESPVLTTSQLIPRIPLTSAASPKVETMTLKTQSITPAQTESPEETDKEEVDISEAEEKLGPAIKSTDVYTEKHSDNLFKRTEVLAAVIAGGVIGFLFAIFLILLLVYRMRKKDEGSYDLGERKPSSAAYQKAPTKEFYA.

A signal peptide spans 1 to 18 (MQRAWILLTLGLMACVSA). Residues 19-145 (ETRTELTSDK…HSDNLFKRTE (127 aa)) lie on the Extracellular side of the membrane. Residues Ser-41, Ser-55, and Ser-57 are each glycosylated (O-linked (Xyl...) (glycosaminoglycan) serine). 2 disordered regions span residues 41–63 (SGVYPIDDDDYSSASGSGADEDI) and 88–118 (ETMTLKTQSITPAQTESPEETDKEEVDISEA). Over residues 91 to 103 (TLKTQSITPAQTE) the composition is skewed to polar residues. A compositionally biased stretch (acidic residues) spans 104-117 (SPEETDKEEVDISE). Phosphoserine is present on Ser-116. A helical transmembrane segment spans residues 146-170 (VLAAVIAGGVIGFLFAIFLILLLVY). Topologically, residues 171–202 (RMRKKDEGSYDLGERKPSSAAYQKAPTKEFYA) are cytoplasmic. A disordered region spans residues 179–202 (SYDLGERKPSSAAYQKAPTKEFYA). Ser-188 carries the post-translational modification Phosphoserine.

Belongs to the syndecan proteoglycan family. In terms of assembly, interacts (via cytoplasmic domain) with SARM1. Forms a complex with SDCBP and PDCD6IP. O-glycosylated; contains both heparan sulfate and chondroitin sulfate. In terms of processing, phosphorylated on serine residues. In terms of tissue distribution, preferential expression in cells of mesenchymal origin.

It localises to the membrane. Cell surface proteoglycan which regulates dendritic arbor morphogenesis. This is Syndecan-2 (Sdc2) from Mus musculus (Mouse).